The sequence spans 340 residues: Ketol-acid reductoisomerase (NADP(+)) (340 aa).

The KARI N-terminal Rossmann domain occupies 1–182 (MRVYYDRDCD…GGGRSGIIET (182 aa)). Residues 24–27 (YGSQ), arginine 48, serine 51, serine 53, and 83–86 (DELQ) each bind NADP(+). Histidine 108 is a catalytic residue. Position 134 (glycine 134) interacts with NADP(+). The KARI C-terminal knotted domain occupies 183–329 (NFREECETDL…ETLRGMMPWI (147 aa)). Aspartate 191, glutamate 195, glutamate 227, and glutamate 231 together coordinate Mg(2+). Substrate is bound at residue serine 252.

This sequence belongs to the ketol-acid reductoisomerase family. Mg(2+) is required as a cofactor.

It carries out the reaction (2R)-2,3-dihydroxy-3-methylbutanoate + NADP(+) = (2S)-2-acetolactate + NADPH + H(+). It catalyses the reaction (2R,3R)-2,3-dihydroxy-3-methylpentanoate + NADP(+) = (S)-2-ethyl-2-hydroxy-3-oxobutanoate + NADPH + H(+). The protein operates within amino-acid biosynthesis; L-isoleucine biosynthesis; L-isoleucine from 2-oxobutanoate: step 2/4. Its pathway is amino-acid biosynthesis; L-valine biosynthesis; L-valine from pyruvate: step 2/4. In terms of biological role, involved in the biosynthesis of branched-chain amino acids (BCAA). Catalyzes an alkyl-migration followed by a ketol-acid reduction of (S)-2-acetolactate (S2AL) to yield (R)-2,3-dihydroxy-isovalerate. In the isomerase reaction, S2AL is rearranged via a Mg-dependent methyl migration to produce 3-hydroxy-3-methyl-2-ketobutyrate (HMKB). In the reductase reaction, this 2-ketoacid undergoes a metal-dependent reduction by NADPH to yield (R)-2,3-dihydroxy-isovalerate. The polypeptide is Ketol-acid reductoisomerase (NADP(+)) (Roseobacter denitrificans (strain ATCC 33942 / OCh 114) (Erythrobacter sp. (strain OCh 114))).